Consider the following 168-residue polypeptide: Large ribosomal subunit protein uL10 (168 aa).

This sequence belongs to the universal ribosomal protein uL10 family. Part of the ribosomal stalk of the 50S ribosomal subunit. The N-terminus interacts with L11 and the large rRNA to form the base of the stalk. The C-terminus forms an elongated spine to which L12 dimers bind in a sequential fashion forming a multimeric L10(L12)X complex.

In terms of biological role, forms part of the ribosomal stalk, playing a central role in the interaction of the ribosome with GTP-bound translation factors. This Clostridium acetobutylicum (strain ATCC 824 / DSM 792 / JCM 1419 / IAM 19013 / LMG 5710 / NBRC 13948 / NRRL B-527 / VKM B-1787 / 2291 / W) protein is Large ribosomal subunit protein uL10.